The primary structure comprises 631 residues: MTVIDKNDLAVFEKYYLDTLQTTFLQKAEKVAHATRQFSDDGNIFVNMNTWSSAVDFGIVLHTLIGYGVRFNNRNDELYENEELAYGLYEAMHLIYEHLPDPAPTHSAPLGLIVPDWYHFSITMPECFQNTCIVLRDHYDLRELTESLLHYYLPLPTLSMGLWRTAGNAMRMCLPYCYGQLLRGYTFAEIGDETQVQYVLDLIKFPLVKSGNGIHYDYAYFDHTDVRAYGYLVNSYFTFSYYNFLFGEETVNMQNVYNSLSLIGSNQGIVNPGLLSRNGSNYSAVLAHLIEFVDGVFSGDFSKILTVRNNRYFGSVVGQSPDIAYYEADPNNSLHAPLWAMTRRIWSNTGRVLSYRSVGLESGILLTTNLNGVINVPTTGPSTSSFHPTLAYTALAATENAGGMAMHVRLAELNLEFHSYTLYHRYGMFHLYDKIRTLRHITNNARCVVLVRDNNNESRWTSASNLISPRITAKHHNIINNSSLSNFDVRTFDALNLSTAEQIISAELMNRGGGVTCFSLLAQDVAGNDNTTITRIPESNILVIATNSNSIQCVIDFPVVVLKDEETRQITINDATNISRNLHQLSIDKIVNVLSVLSLSVDSLILPANITRSANSFYLQNDHGNQFKFMY.

This sequence belongs to the baculoviridae E66 family.

Its subcellular location is the virion membrane. In terms of biological role, component of the polyhedra envelope. The protein is Occlusion-derived virus envelope protein E66 of Leucania separata nucleopolyhedrovirus (LsNPV).